We begin with the raw amino-acid sequence, 164 residues long: Peroxynitrite isomerase 2 (164 aa).

The GXWXGXG signature appears at 17-23; it reads GSWAGRG. H155 lines the heme b pocket.

It belongs to the nitrobindin family. As to quaternary structure, homodimer. It depends on heme b as a cofactor.

It carries out the reaction peroxynitrite = nitrate. The protein operates within nitrogen metabolism. Heme-binding protein able to scavenge peroxynitrite and to protect free L-tyrosine against peroxynitrite-mediated nitration, by acting as a peroxynitrite isomerase that converts peroxynitrite to nitrate. Therefore, this protein likely plays a role in peroxynitrite sensing and in the detoxification of reactive nitrogen and oxygen species (RNS and ROS, respectively). Is able to bind nitric oxide (NO) in vitro, but may act as a sensor of peroxynitrite levels in vivo. The sequence is that of Peroxynitrite isomerase 2 from Mycobacterium bovis (strain BCG / Pasteur 1173P2).